The following is a 280-amino-acid chain: Chaperone for lacto-N-biosidase (280 aa).

Positions 1–37 (MPRRHRFAAAIAAVAVAAVLLVTLTVAVVTHGDGAFA) are cleaved as a signal peptide.

Homodimer.

The protein localises to the secreted. Functionally, chaperone required for active expression of the lacto-N-biosidase LnbX. In Bifidobacterium longum subsp. longum (strain ATCC 15707 / DSM 20219 / JCM 1217 / NCTC 11818 / E194b), this protein is Chaperone for lacto-N-biosidase.